A 310-amino-acid polypeptide reads, in one-letter code: Zinc finger protein-like 1 (310 aa).

A B box-type; degenerate zinc finger spans residues 1–43 (MGLCKCPKRKVTNLFCFEHRVNVCEHCLVANHAKCIVQSYLQW). Residues 1–266 (MGLCKCPKRK…RPLTLLQRAG (266 aa)) are Cytoplasmic-facing. The segment at 53 to 101 (CRLCNIPLASRETTRLVCYDLFHWACLNERAAQLPRNTAPAGYQCPSCN) adopts an RING-type; degenerate zinc-finger fold. The disordered stretch occupies residues 145-231 (PEPLNTSDFS…RTPGLHGDCD (87 aa)). The segment covering 148-165 (LNTSDFSDWSSFNASSTP) has biased composition (polar residues). The segment covering 213–224 (KVYDTRDDDRTP) has biased composition (basic and acidic residues). A helical membrane pass occupies residues 267-287 (LLLLLGLLGFLALLALMSRLG). Topologically, residues 288–310 (RAAADSDPNLDPLMNPHIRVGPS) are lumenal.

Belongs to the ZFPL1 family. In terms of assembly, interacts with GOLGA2/GM130. Post-translationally, phosphorylated. In terms of tissue distribution, expressed strongly in the exocrine pancreas.

It localises to the golgi apparatus. It is found in the cis-Golgi network membrane. Required for cis-Golgi integrity and efficient ER to Golgi transport. Involved in the maintenance of the integrity of the cis-Golgi, possibly via its interaction with GOLGA2/GM130. The chain is Zinc finger protein-like 1 (ZFPL1) from Homo sapiens (Human).